Consider the following 957-residue polypeptide: SH3 domain-binding protein 4-A (957 aa).

Residues 54 to 113 form the SH3 1 domain; that stretch reads ENVKEVVAIKDYCPNNFTTLKFSKGEHLYVLDASGGDWWYAHNSTEMGYIPSSYVQPLNY. One can recognise a ZU5 domain in the interval 312-449; sequence TSIVCRLDSS…LEPVMYVVMV (138 aa). Residues 649–719 form the SH3 2 domain; the sequence is TSLKYGKLLK…HAKNVLVVGK (71 aa).

In terms of assembly, homodimer or homooligomer.

The protein localises to the membrane. Its subcellular location is the clathrin-coated pit. It localises to the cytoplasmic vesicle. The protein resides in the clathrin-coated vesicle. It is found in the nucleus. Its function is as follows. Possible role in regulating endocytosis of the transferrin receptor at the plasma membrane. Alternatively, may function as a negative regulator of the amino acid-induced TOR signaling by inhibiting the formation of active Rag GTPase complexes. Preferentially binds inactive Rag GTPase complexes and prevents their interaction with the mTORC1 complex inhibiting its relocalization to lysosomes and its activation. Thereby, may indirectly regulate cell growth, proliferation and autophagy. This Xenopus laevis (African clawed frog) protein is SH3 domain-binding protein 4-A (sh3bp4-a).